We begin with the raw amino-acid sequence, 212 residues long: Probable transaldolase (212 aa).

The active-site Schiff-base intermediate with substrate is lysine 84.

The protein belongs to the transaldolase family. Type 3B subfamily.

It is found in the cytoplasm. The catalysed reaction is D-sedoheptulose 7-phosphate + D-glyceraldehyde 3-phosphate = D-erythrose 4-phosphate + beta-D-fructose 6-phosphate. It participates in carbohydrate degradation; pentose phosphate pathway; D-glyceraldehyde 3-phosphate and beta-D-fructose 6-phosphate from D-ribose 5-phosphate and D-xylulose 5-phosphate (non-oxidative stage): step 2/3. Its function is as follows. Transaldolase is important for the balance of metabolites in the pentose-phosphate pathway. The chain is Probable transaldolase from Bacillus velezensis (strain DSM 23117 / BGSC 10A6 / LMG 26770 / FZB42) (Bacillus amyloliquefaciens subsp. plantarum).